Reading from the N-terminus, the 51-residue chain is Large ribosomal subunit protein bL33 (51 aa).

A disordered region spans residues 1 to 23 (MREKIKLESSAGTGHFYTTTKNK). A compositionally biased stretch (polar residues) spans 10-20 (SAGTGHFYTTT).

It belongs to the bacterial ribosomal protein bL33 family.

This chain is Large ribosomal subunit protein bL33, found in Nitrosomonas eutropha (strain DSM 101675 / C91 / Nm57).